The sequence spans 282 residues: Casein kinase II subunit beta-2 (282 aa).

Positions 1–92 are disordered; that stretch reads MYRERGMVGS…ESEVSGSDGE (92 aa). A compositionally biased stretch (basic and acidic residues) spans 13 to 28; that stretch reads EVVDRKRINEIHDNRP. Composition is skewed to polar residues over residues 29-47 and 61-71; these read SHSM…STSV and RSGSISKTNIS. Acidic residues predominate over residues 75 to 92; that stretch reads DISDTDSEESEVSGSDGE.

This sequence belongs to the casein kinase 2 subunit beta family. As to quaternary structure, heterotetramer of two catalytic alpha subunits and two regulatory beta subunits. Interacts with CCA1. Phosphorylated by alpha subunit.

It is found in the cytoplasm. Its subcellular location is the cytosol. The protein resides in the nucleus. Plays a complex role in regulating the basal catalytic activity of the alpha subunit. The tetrameric holoenzyme CK2, composed of two alpha and two beta subunits, phosphorylates the transcription factor PIF1 after an exposure to light, resulting in a proteasome-dependent degradation of PIF1 and promotion of photomorphogenesis. CK2 phosphorylates translation initiation factors. May participate in the regulation of the initiation of translation. This chain is Casein kinase II subunit beta-2 (CKB2), found in Arabidopsis thaliana (Mouse-ear cress).